The following is a 193-amino-acid chain: Peptidyl-tRNA hydrolase (193 aa).

Tyr15 is a tRNA binding site. His20 functions as the Proton acceptor in the catalytic mechanism. TRNA contacts are provided by Phe65, Asn67, and Asn113.

The protein belongs to the PTH family. Monomer.

The protein resides in the cytoplasm. It carries out the reaction an N-acyl-L-alpha-aminoacyl-tRNA + H2O = an N-acyl-L-amino acid + a tRNA + H(+). Its function is as follows. Hydrolyzes ribosome-free peptidyl-tRNAs (with 1 or more amino acids incorporated), which drop off the ribosome during protein synthesis, or as a result of ribosome stalling. In terms of biological role, catalyzes the release of premature peptidyl moieties from peptidyl-tRNA molecules trapped in stalled 50S ribosomal subunits, and thus maintains levels of free tRNAs and 50S ribosomes. This chain is Peptidyl-tRNA hydrolase, found in Ehrlichia ruminantium (strain Gardel).